The chain runs to 625 residues: Baeyer-Villiger monooxygenase ATR8 (625 aa).

FAD is bound by residues Asp-112, 120–123 (TWYW), Asp-132, and Tyr-138. Position 130 to 132 (130 to 132 (QCD)) interacts with NADP(+). NADP(+) is bound by residues 266–272 (TGATAIQ), 289–290 (RT), and 405–406 (KR).

This sequence belongs to the FAD-binding monooxygenase family. FAD is required as a cofactor.

Its pathway is mycotoxin biosynthesis. Baeyer-Villiger monooxygenase; part of the core atranone cluster (CAC) which products are predicted to catalyze most or all steps of mycotoxin atranone synthesis, starting from geranylgeranyl pyrophosphate (GGPP). The initial cyclization of GGPP to dolabellane is probably performed by the terpene cyclase ATR13. The Baeyer-Villiger oxidation near the end of the atranone synthesis, which converts atranones D and E to atranones F and G is predicted to be catalyzed by the monooxygenase ATR8. Of the CAC's other predicted gene products, the reducing PKS ATR6 might synthesize a polyketide chain. This polyketide is probably transferred onto the atranone backbone by the polyketide transferase ATR5. Other predicted CAC products include 4 oxygenases (ATR2, ATR3, ATR4, and ATR14), 3 short-chain reductases (ATR7, ATR9, and ATR10), and a methyltransferase (ATR12). These may all be involved in the various steps of atranone biosynthesis, although their specific roles must await experimental determination. The chain is Baeyer-Villiger monooxygenase ATR8 from Stachybotrys chlorohalonatus (strain IBT 40285).